The primary structure comprises 588 residues: Thioredoxin domain-containing protein 3 (588 aa).

Positions 2 to 119 constitute a Thioredoxin domain; it reads ASKKREVQLQ…VINLIDEERK (118 aa). Cysteines 39 and 42 form a disulfide. 3 NDK regions span residues 157-257, 315-455, and 456-588; these read IAII…DQPE, LEKT…STLG, and LIKP…PEEN. Positions 230 to 261 are disordered; sequence GSKHNPPSEETEPQTDTEPNERSEDQPEVEAQ.

In the C-terminal section; belongs to the NDK family. As to quaternary structure, monomer. In terms of tissue distribution, testis-specific. Expressed only in primary spermatocytes and round spermatids.

The protein localises to the cytoplasm. In terms of biological role, probably required during the final stages of sperm tail maturation in the testis and/or epididymis, where extensive disulfide bonding of fibrous sheath (FS) proteins occurs. In vitro, it has neither nucleoside diphosphate kinase (NDPK) activity nor reducing activity on disulfide bonds. Exhibits a 3'-5' exonuclease activity with a preference for single-stranded DNA, suggesting roles in DNA proofreading and repair. The chain is Thioredoxin domain-containing protein 3 from Homo sapiens (Human).